The sequence spans 366 residues: Inhibin alpha chain (366 aa).

The N-terminal stretch at 1-20 (MVSQRSLLLLLLLTLRDVDS) is a signal peptide. Residues 21 to 63 (CQGPELVRELVLAKVKALFLDALGPPAMDGEGGDPGIRRLPRR) constitute a propeptide that is removed on maturation. Residues 64–233 (HAVGGFMHRT…APSAGERARR (170 aa)) constitute a propeptide, inhibin alpha N-terminal region. Asn-147 and Asn-269 each carry an N-linked (GlcNAc...) asparagine glycan. Intrachain disulfides connect Cys-263/Cys-328, Cys-292/Cys-363, and Cys-296/Cys-365.

This sequence belongs to the TGF-beta family. As to quaternary structure, dimeric, linked by one or more disulfide bonds. Activin B is a dimer of alpha and beta-B. Inhibin A is a dimer of alpha and beta-A. Inhibin B is a dimer of alpha and beta-B. Interacts with TGFBR3L; this interaction regulates female fertility. In terms of processing, proteolytic processing yields a number of bioactive forms, consisting either solely of the mature alpha chain, of the most N-terminal propeptide linked through a disulfide bond to the mature alpha chain, or of the entire proprotein.

It localises to the secreted. Inhibins and activins inhibit and activate, respectively, the secretion of follitropin by the pituitary gland. Inhibins/activins are involved in regulating a number of diverse functions such as hypothalamic and pituitary hormone secretion, gonadal hormone secretion, germ cell development and maturation, erythroid differentiation, insulin secretion, nerve cell survival, embryonic axial development or bone growth, depending on their subunit composition. Inhibins appear to oppose the functions of activins. Functionally, inhibin A is a dimer of alpha/INHA and beta-A/INHBA that functions as a feedback regulator in the hypothalamic-pituitary-gonadal (HPG) axis. Inhibits the secretion of FSH from the anterior pituitary gland by acting on pituitary gonadotrope cells. Antagonizes activin A by binding to the proteoglycan, betaglycan, and forming a stable complex with and, thereby, sequestering type II activin receptors while excluding type I receptor. Its function is as follows. Inhibin B is a dimer of alpha and beta-B that plays a crucial role in the regulation of the reproductive system by inhibiting the secretion of follicle-stimulating hormone (FSH) from the anterior pituitary gland. Thereby, maintains reproductive homeostasis in both males and females. Acts as a more potent suppressor of FSH release than inhibin A. Functions as competitive receptor antagonist binding activin type II receptors with high affinity in the presence of the TGF-beta type III coreceptor/TGFBR3L. The polypeptide is Inhibin alpha chain (Inha) (Mus musculus (Mouse)).